The chain runs to 168 residues: Photosystem I assembly protein Ycf3 (168 aa).

3 TPR repeats span residues 35 to 68 (AFTY…EMDP), 72 to 105 (SYIL…NPFL), and 120 to 153 (GEQA…TPGN).

Belongs to the Ycf3 family.

It is found in the plastid. The protein localises to the chloroplast thylakoid membrane. Its function is as follows. Essential for the assembly of the photosystem I (PSI) complex. May act as a chaperone-like factor to guide the assembly of the PSI subunits. The polypeptide is Photosystem I assembly protein Ycf3 (Pelargonium hortorum (Common geranium)).